The sequence spans 414 residues: uncharacterized protein (414 aa).

The tract at residues 87–117 (KTNDDNKTNGRETHLRPSPSKPEYTGRPTQN) is disordered. The span at 88–101 (TNDDNKTNGRETHL) shows a compositional bias: basic and acidic residues. Residues 243-405 (SMLQSSIDKL…RNKLEMEVER (163 aa)) adopt a coiled-coil conformation.

This is an uncharacterized protein from Encephalitozoon cuniculi (strain GB-M1) (Microsporidian parasite).